Reading from the N-terminus, the 225-residue chain is Uracil-DNA glycosylase (225 aa).

Catalysis depends on aspartate 65, which acts as the Proton acceptor.

This sequence belongs to the uracil-DNA glycosylase (UDG) superfamily. UNG family.

It localises to the cytoplasm. The catalysed reaction is Hydrolyzes single-stranded DNA or mismatched double-stranded DNA and polynucleotides, releasing free uracil.. In terms of biological role, excises uracil residues from the DNA which can arise as a result of misincorporation of dUMP residues by DNA polymerase or due to deamination of cytosine. The protein is Uracil-DNA glycosylase of Bacillus mycoides (strain KBAB4) (Bacillus weihenstephanensis).